Reading from the N-terminus, the 416-residue chain is Cysteate synthase (416 aa).

K104 carries the N6-(pyridoxal phosphate)lysine modification. N130 is a pyridoxal 5'-phosphate binding site.

This sequence belongs to the threonine synthase family. Cysteate synthase subfamily. In terms of assembly, homotrimer. The cofactor is pyridoxal 5'-phosphate.

The catalysed reaction is O-phospho-L-serine + sulfite + H(+) = L-cysteate + phosphate. It participates in cofactor biosynthesis; coenzyme M biosynthesis. With respect to regulation, is inhibited by AP3 (DL-2-amino-3-phosphonopropionate) and, to a lesser extent, by L-aspartate or AP4 (DL-2-amino-4-phosphonobutyrate). Is also inhibited by EDTA in vitro. Functionally, specifically catalyzes the beta-elimination of phosphate from L-phosphoserine and the beta-addition of sulfite to the dehydroalanine intermediate to produce L-cysteate. Does not display threonine synthase activity like the paralog protein ThrC. This Methanosarcina acetivorans (strain ATCC 35395 / DSM 2834 / JCM 12185 / C2A) protein is Cysteate synthase.